The primary structure comprises 150 residues: Large ribosomal subunit protein bL9 (150 aa).

The protein belongs to the bacterial ribosomal protein bL9 family.

In terms of biological role, binds to the 23S rRNA. The polypeptide is Large ribosomal subunit protein bL9 (Shewanella halifaxensis (strain HAW-EB4)).